The sequence spans 498 residues: ATP synthase subunit beta, chloroplastic (498 aa).

Residue 172 to 179 (GGAGVGKT) coordinates ATP.

It belongs to the ATPase alpha/beta chains family. In terms of assembly, F-type ATPases have 2 components, CF(1) - the catalytic core - and CF(0) - the membrane proton channel. CF(1) has five subunits: alpha(3), beta(3), gamma(1), delta(1), epsilon(1). CF(0) has four main subunits: a(1), b(1), b'(1) and c(9-12).

Its subcellular location is the plastid. It is found in the chloroplast thylakoid membrane. The enzyme catalyses ATP + H2O + 4 H(+)(in) = ADP + phosphate + 5 H(+)(out). Functionally, produces ATP from ADP in the presence of a proton gradient across the membrane. The catalytic sites are hosted primarily by the beta subunits. This Calamus usitatus (Palm tree) protein is ATP synthase subunit beta, chloroplastic.